Consider the following 279-residue polypeptide: Undecaprenyl-diphosphatase (279 aa).

The next 8 membrane-spanning stretches (helical) occupy residues 2-22, 44-64, 85-105, 113-133, 163-183, 188-208, 225-245, and 255-275; these read LFIE…TEWL, AFME…VIVI, WQLW…AVPL, FNHM…FLWI, VLSI…AIIL, TVAA…YSGL, LLVL…VIKL, and FTVF…YSVF.

It belongs to the UppP family.

It localises to the cell membrane. It catalyses the reaction di-trans,octa-cis-undecaprenyl diphosphate + H2O = di-trans,octa-cis-undecaprenyl phosphate + phosphate + H(+). In terms of biological role, catalyzes the dephosphorylation of undecaprenyl diphosphate (UPP). Confers resistance to bacitracin. In Streptococcus equi subsp. zooepidemicus (strain H70), this protein is Undecaprenyl-diphosphatase.